Consider the following 130-residue polypeptide: Calcium-binding protein KRP1 (130 aa).

The region spanning 72–107 (LTDEDVRCMIKEGDFDCDGALNQMEFCVLMFRLSPD) is the EF-hand domain. Residues Asp85, Asp87, Asp89, and Glu96 each contribute to the Ca(2+) site.

Potential calcium sensor that binds calcium in vitro. This chain is Calcium-binding protein KRP1, found in Arabidopsis thaliana (Mouse-ear cress).